The chain runs to 279 residues: Urease accessory protein UreD (279 aa).

This sequence belongs to the UreD family. UreD, UreF and UreG form a complex that acts as a GTP-hydrolysis-dependent molecular chaperone, activating the urease apoprotein by helping to assemble the nickel containing metallocenter of UreC. The UreE protein probably delivers the nickel.

It localises to the cytoplasm. Required for maturation of urease via the functional incorporation of the urease nickel metallocenter. The protein is Urease accessory protein UreD of Brucella suis (strain ATCC 23445 / NCTC 10510).